Reading from the N-terminus, the 331-residue chain is 7,8-didemethyl-8-hydroxy-5-deazariboflavin synthase (331 aa).

Residues 6 to 244 (ITFSKNAFLP…ADVAVQIPPN (239 aa)) form the Radical SAM core domain. C20, C24, and C27 together coordinate [4Fe-4S] cluster.

The protein belongs to the radical SAM superfamily. CofG family. Consists of two subunits, CofG and CofH. The cofactor is [4Fe-4S] cluster.

The enzyme catalyses 5-amino-5-(4-hydroxybenzyl)-6-(D-ribitylimino)-5,6-dihydrouracil + S-adenosyl-L-methionine = 7,8-didemethyl-8-hydroxy-5-deazariboflavin + 5'-deoxyadenosine + L-methionine + NH4(+) + H(+). It participates in cofactor biosynthesis; coenzyme F0 biosynthesis. In terms of biological role, catalyzes the radical-mediated synthesis of 7,8-didemethyl-8-hydroxy-5-deazariboflavin from 5-amino-5-(4-hydroxybenzyl)-6-(D-ribitylimino)-5,6-dihydrouracil. This Methanoculleus marisnigri (strain ATCC 35101 / DSM 1498 / JR1) protein is 7,8-didemethyl-8-hydroxy-5-deazariboflavin synthase.